The primary structure comprises 36 residues: Photosystem I reaction center subunit VIII (36 aa).

A helical membrane pass occupies residues 10–30 (FVPLVGLVFSAIIMVLSFLYI).

Belongs to the PsaI family.

It localises to the plastid. It is found in the chloroplast thylakoid membrane. May help in the organization of the PsaL subunit. This chain is Photosystem I reaction center subunit VIII, found in Welwitschia mirabilis (Tree tumbo).